Consider the following 1501-residue polypeptide: MSDSKMSSQDESKLEKAISQDSSSENHSINEYHGFDAHTSENIQNLARTFTHDSFKDDSSAGLLKYLTHMSEVPGVNPYEHEEINNDQLNPDSENFNAKFWVKNLRKLFESDPEYYKPSKLGIGYRNLRAYGVANDSDYQPTVTNALWKLATEGFRHFQKDDDSRYFDILKSMDAIMRPGELTVVLGRPGAGCSTLLKTIAVNTYGFHIGKESQITYDGLSPHDIERHYRGDVIYSAETDVHFPHLSVGDTLEFAARLRTPQNRGEGIDRETYAKHMASVYMATYGLSHTRNTNVGNDFVRGVSGGERKRVSIAEASLSGANIQCWDNATRGLDSATALEFIRALKTSAVILDTTPLIAIYQCSQDAYDLFDKVVVLYEGYQIFFGKATKAKEYFEKMGWKCPQRQTTADFLTSLTNPAEREPLPGYEDKVPRTAQEFETYWKNSPEYAELTKEIDEYFVECERSNTRETYRESHVAKQSNNTRPASPYTVSFFMQVRYGVARNFLRMKGDPSIPIFSVFGQLVMGLILSSVFYNLSQTTGSFYYRGAAMFFAVLFNAFSSLLEIMSLFEARPIVEKHKKYALYRPSADALASIISELPVKLAMSMSFNFVFYFMVNFRRNPGRFFFYWLMCIWCTFVMSHLFRSIGAVSTSISGAMTPATVLLLAMVIYTGFVIPTPSMLGWSRWINYINPVGYVFESLMVNEFHGREFQCAQYVPSGPGYENISRSNQVCTAVGSVPGNEMVSGTNYLAGAYQYYNSHKWRNLGITIGFAVFFLAIYIALTEFNKGAMQKGEIVLFLKGSLKKHKRKTAASNKGDIEAGPVAGKLDYQDEAEAVNNEKFTEKGSTGSVDFPENREIFFWRDLTYQVKIKKEDRVILDHVDGWVKPGQITALMGASGAGKTTLLNCLSERVTTGIITDGERLVNGHALDSSFQRSIGYVQQQDVHLETTTVREALQFSAYLRQSNKISKKEKDDYVDYVIDLLEMTDYADALVGVAGEGLNVEQRKRLTIGVELVAKPKLLLFLDEPTSGLDSQTAWSICKLMRKLADHGQAILCTIHQPSALIMAEFDRLLFLQKGGRTAYFGELGENCQTMINYFEKYGADPCPKEANPAEWMLQVVGAAPGSHAKQDYFEVWRNSSEYQAVREEINRMEAELSKLPRDNDPEALLKYAAPLWKQYLLVSWRTIVQDWRSPGYIYSKIFLVVSAALFNGFSFFKAKNNMQGLQNQMFSVFMFFIPFNTLVQQMLPYFVKQRDVYEVREAPSRTFSWFAFIAGQITSEIPYQVAVGTIAFFCWYYPLGLYNNATPTDSVNPRGVLMWMLVTAFYVYTATMGQLCMSFSELADNAANLATLLFTMCLNFCGVLAGPDVLPGFWIFMYRCNPFTYLVQAMLSTGLANTFVKCAEREYVSVKPPNGESCSTYLDPYIKFAGGYFETRNDGSCAFCQMSSTNTFLKSVNSLYSERWRNFGIFIAFIAINIILTVIFYWLARVPKGNREKKNKK.

The segment at 1–30 is disordered; that stretch reads MSDSKMSSQDESKLEKAISQDSSSENHSIN. The Cytoplasmic portion of the chain corresponds to 1 to 513; that stretch reads MSDSKMSSQD…NFLRMKGDPS (513 aa). The tract at residues 2 to 512 is NBD1; sequence SDSKMSSQDE…RNFLRMKGDP (511 aa). Positions 8-18 are enriched in basic and acidic residues; sequence SQDESKLEKAI. The ABC transporter 1 domain occupies 150 to 404; sequence LATEGFRHFQ…FEKMGWKCPQ (255 aa). The helical transmembrane segment at 514–534 threads the bilayer; sequence IPIFSVFGQLVMGLILSSVFY. Residues 535-548 lie on the Extracellular side of the membrane; sequence NLSQTTGSFYYRGA. Residues 549–569 traverse the membrane as a helical segment; it reads AMFFAVLFNAFSSLLEIMSLF. Over 570-597 the chain is Cytoplasmic; it reads EARPIVEKHKKYALYRPSADALASIISE. Residues 598-618 traverse the membrane as a helical segment; the sequence is LPVKLAMSMSFNFVFYFMVNF. Residues 619 to 622 are Extracellular-facing; the sequence is RRNP. Residues 623-643 form a helical membrane-spanning segment; the sequence is GRFFFYWLMCIWCTFVMSHLF. At 644-654 the chain is on the cytoplasmic side; it reads RSIGAVSTSIS. The helical transmembrane segment at 655–675 threads the bilayer; sequence GAMTPATVLLLAMVIYTGFVI. The Extracellular portion of the chain corresponds to 676-764; that stretch reads PTPSMLGWSR…QYYNSHKWRN (89 aa). The chain crosses the membrane as a helical span at residues 765 to 785; the sequence is LGITIGFAVFFLAIYIALTEF. The Cytoplasmic segment spans residues 786–1195; that stretch reads NKGAMQKGEI…TIVQDWRSPG (410 aa). The segment at 786 to 1195 is NBD2; it reads NKGAMQKGEI…TIVQDWRSPG (410 aa). Positions 859 to 1103 constitute an ABC transporter 2 domain; it reads FFWRDLTYQV…MINYFEKYGA (245 aa). 895-902 is a binding site for ATP; the sequence is GASGAGKT. The stretch at 1137-1164 forms a coiled coil; the sequence is RNSSEYQAVREEINRMEAELSKLPRDND. The chain crosses the membrane as a helical span at residues 1196–1216; sequence YIYSKIFLVVSAALFNGFSFF. Topologically, residues 1217–1229 are extracellular; sequence KAKNNMQGLQNQM. A helical transmembrane segment spans residues 1230 to 1250; sequence FSVFMFFIPFNTLVQQMLPYF. The Cytoplasmic portion of the chain corresponds to 1251-1280; the sequence is VKQRDVYEVREAPSRTFSWFAFIAGQITSE. A helical transmembrane segment spans residues 1281–1301; the sequence is IPYQVAVGTIAFFCWYYPLGL. The Extracellular segment spans residues 1302 to 1314; that stretch reads YNNATPTDSVNPR. A helical membrane pass occupies residues 1315–1335; sequence GVLMWMLVTAFYVYTATMGQL. At 1336–1355 the chain is on the cytoplasmic side; sequence CMSFSELADNAANLATLLFT. A helical transmembrane segment spans residues 1356–1376; it reads MCLNFCGVLAGPDVLPGFWIF. Topologically, residues 1377–1466 are extracellular; the sequence is MYRCNPFTYL…NSLYSERWRN (90 aa). A helical membrane pass occupies residues 1467 to 1487; that stretch reads FGIFIAFIAINIILTVIFYWL. At 1488-1501 the chain is on the cytoplasmic side; sequence ARVPKGNREKKNKK.

Belongs to the ABC transporter superfamily.

It is found in the cell membrane. Its activity is regulated as follows. Disulfiram reverses CDR1-mediated drug resistance by interaction with both ATP and substrate-binding sites of the transporter and may be useful for antifungal therapy. Functionally, pleiotropic ABC efflux transporter that confers resistance to numerous chemicals including anisomycin, cycloheximide, fluconazole, miconazole, ketoconazole, itriconazole, nystatin, terbinafine, amorolfine, brefeldin A, amphotericin B, fluphenazine, as well as estrogen. Plays a role in farnesol-induced apoptotic process through glutathione efflux activity. Mediates in-to-out translocation of membrane phospholipids including aminophospholipids and thus regulates asymmetric distribution of phosphatidylethanolamine. Exhibits nucleoside triphosphatase activity. In Candida albicans (strain SC5314 / ATCC MYA-2876) (Yeast), this protein is Pleiotropic ABC efflux transporter of multiple drugs CDR1 (CDR1).